The following is a 262-amino-acid chain: 3-methyl-2-oxobutanoate hydroxymethyltransferase (262 aa).

Mg(2+)-binding residues include aspartate 44 and aspartate 83. 3-methyl-2-oxobutanoate is bound by residues 44-45 (DS), aspartate 83, and lysine 112. Residue glutamate 114 participates in Mg(2+) binding. Glutamate 181 functions as the Proton acceptor in the catalytic mechanism.

Belongs to the PanB family. Homodecamer; pentamer of dimers. The cofactor is Mg(2+).

The protein localises to the cytoplasm. It carries out the reaction 3-methyl-2-oxobutanoate + (6R)-5,10-methylene-5,6,7,8-tetrahydrofolate + H2O = 2-dehydropantoate + (6S)-5,6,7,8-tetrahydrofolate. It participates in cofactor biosynthesis; (R)-pantothenate biosynthesis; (R)-pantoate from 3-methyl-2-oxobutanoate: step 1/2. Functionally, catalyzes the reversible reaction in which hydroxymethyl group from 5,10-methylenetetrahydrofolate is transferred onto alpha-ketoisovalerate to form ketopantoate. This is 3-methyl-2-oxobutanoate hydroxymethyltransferase from Thiobacillus denitrificans (strain ATCC 25259 / T1).